The chain runs to 661 residues: Ubiquitin carboxyl-terminal hydrolase 25 (661 aa).

One can recognise a USP domain in the interval 24-335 (LGLRNLGNTC…KAYILFFSRS (312 aa)). Cys-33 serves as the catalytic Nucleophile. His-294 functions as the Proton acceptor in the catalytic mechanism. Disordered stretches follow at residues 387–406 (GNLASSKPHKFIRPKPRAEQ) and 449–558 (FHQD…LCSS). The span at 449-461 (FHQDENIAPKANK) shows a compositional bias: basic and acidic residues. Polar residues-rich tracts occupy residues 462-475 (ENSVSVLPTKVNSG) and 545-558 (NGVSTTQSKGLCSS).

This sequence belongs to the peptidase C19 family.

It carries out the reaction Thiol-dependent hydrolysis of ester, thioester, amide, peptide and isopeptide bonds formed by the C-terminal Gly of ubiquitin (a 76-residue protein attached to proteins as an intracellular targeting signal).. Its function is as follows. Recognizes and hydrolyzes the peptide bond at the C-terminal Gly of ubiquitin. Involved in the processing of poly-ubiquitin precursors as well as that of ubiquitinated proteins. This chain is Ubiquitin carboxyl-terminal hydrolase 25 (UBP25), found in Arabidopsis thaliana (Mouse-ear cress).